An 870-amino-acid chain; its full sequence is Glycerol-3-phosphate acyltransferase (870 aa).

Residues 1–27 form a disordered region; sequence MPKKNSPLLPKETTPTQSSVDTSGSSN. The segment covering 13 to 27 has biased composition (polar residues); that stretch reads TTPTQSSVDTSGSSN. Positions 351 to 356 match the HXXXXD motif motif; it reads HRSHID.

Belongs to the GPAT/DAPAT family.

It localises to the cell inner membrane. The enzyme catalyses sn-glycerol 3-phosphate + an acyl-CoA = a 1-acyl-sn-glycero-3-phosphate + CoA. Its pathway is phospholipid metabolism; CDP-diacylglycerol biosynthesis; CDP-diacylglycerol from sn-glycerol 3-phosphate: step 1/3. In Xylella fastidiosa (strain 9a5c), this protein is Glycerol-3-phosphate acyltransferase (plsB).